Consider the following 216-residue polypeptide: Somatotropin (216 aa).

Positions 1–26 (MAASPRNSVLLAFALLCLPWPQEVGA) are cleaved as a signal peptide. Position 45 (His-45) interacts with Zn(2+). A disulfide bond links Cys-78 and Cys-189. Ser-131 is subject to Phosphoserine. Residue Glu-198 participates in Zn(2+) binding. Cys-206 and Cys-214 are disulfide-bonded.

It belongs to the somatotropin/prolactin family.

The protein resides in the secreted. Its function is as follows. Plays an important role in growth control. Its major role in stimulating body growth is to stimulate the liver and other tissues to secrete IGF1. It stimulates both the differentiation and proliferation of myoblasts. It also stimulates amino acid uptake and protein synthesis in muscle and other tissues. The protein is Somatotropin (GH1) of Canis lupus familiaris (Dog).